Consider the following 138-residue polypeptide: Basic phospholipase A2 homolog ammodytin L (138 aa).

Residues 1–16 (MRILWIVAVCLIGVEG) form the signal peptide. Disulfide bonds link C42/C131, C44/C60, C59/C111, C65/C138, C66/C104, C73/C97, and C91/C102. The tract at residues 121–133 (KKYKVYLRFKCKG) is important for membrane-damaging activities in eukaryotes and bacteria; heparin-binding.

Belongs to the phospholipase A2 family. Group II subfamily. S49 sub-subfamily. As to expression, expressed by the venom gland.

The protein resides in the secreted. In terms of biological role, snake venom phospholipase A2 homolog that lacks enzymatic activity. Is very active in inducing myonecrosis in vivo and shows a potent calcium-independent membrane-damaging activity in vitro, most probably by binding and incorporating in the membrane. Also acts as a presynaptic neurotoxin. A model of myotoxic mechanism has been proposed: an apo Lys49-PLA2 is activated by the entrance of a hydrophobic molecule (e.g. fatty acid) at the hydrophobic channel of the protein leading to a reorientation of a monomer. This reorientation causes a transition between 'inactive' to 'active' states, causing alignment of C-terminal and membrane-docking sites (MDoS) side-by-side and putting the membrane-disruption sites (MDiS) in the same plane, exposed to solvent and in a symmetric position for both monomers. The MDoS region stabilizes the toxin on membrane by the interaction of charged residues with phospholipid head groups. Subsequently, the MDiS region destabilizes the membrane with penetration of hydrophobic residues. This insertion causes a disorganization of the membrane, allowing an uncontrolled influx of ions (i.e. calcium and sodium), and eventually triggering irreversible intracellular alterations and cell death. This is Basic phospholipase A2 homolog ammodytin L from Vipera ammodytes ammodytes (Western sand viper).